Reading from the N-terminus, the 456-residue chain is Signal recognition particle receptor FtsY (456 aa).

The segment covering 1 to 26 (MFDGLKKKLNRFRNDVEETAEEKAEA) has biased composition (basic and acidic residues). The segment at 1–163 (MFDGLKKKLN…DEDDSSGPGR (163 aa)) is disordered. Acidic residues predominate over residues 27-39 (AADEAESDADAEA). The segment covering 40–62 (ESAPADTDNAAVEPEASEPAAAD) has biased composition (low complexity). Residues 63 to 81 (PDADAVGDADAGSEADAVD) are compositionally biased toward acidic residues. Residues 82–97 (AADAPADAESSSAAVE) show a composition bias toward low complexity. A compositionally biased stretch (acidic residues) spans 112 to 134 (PDSEVDAGADTGDEPSGEPTADE). Residues 265–272 (GINGVGKT), 347–351 (DTAGR), and 405–408 (TKAD) contribute to the GTP site.

Belongs to the GTP-binding SRP family. FtsY subfamily. As to quaternary structure, part of the signal recognition particle protein translocation system, which is composed of SRP and FtsY.

It is found in the cell membrane. It localises to the cytoplasm. The catalysed reaction is GTP + H2O = GDP + phosphate + H(+). Involved in targeting and insertion of nascent membrane proteins into the cytoplasmic membrane. Acts as a receptor for the complex formed by the signal recognition particle (SRP) and the ribosome-nascent chain (RNC). The protein is Signal recognition particle receptor FtsY of Haloferax volcanii (strain ATCC 29605 / DSM 3757 / JCM 8879 / NBRC 14742 / NCIMB 2012 / VKM B-1768 / DS2) (Halobacterium volcanii).